A 415-amino-acid polypeptide reads, in one-letter code: Phosphoglycerate kinase (415 aa).

Val-23, Asp-24, Phe-25, Asn-26, Gln-39, Arg-40, Ser-63, His-64, Gly-66, Arg-67, Leu-122, Arg-123, and Arg-170 together coordinate (2R)-3-phosphoglycerate. Gly-213 is an ADP binding site. Gly-213 lines the CDP pocket. AMP contacts are provided by Ala-214 and Lys-215. Ala-214 contacts ATP. Ala-214 contacts Mg(2+). Residue Asp-218 participates in CDP binding. Residue Asp-218 coordinates Mg(2+). Lys-219 provides a ligand contact to AMP. Lys-219 contacts ATP. ADP is bound at residue Gly-237. CDP is bound at residue Gly-237. Residues Gly-238 and Gly-311 each contribute to the AMP site. ATP contacts are provided by Gly-238 and Gly-311. Positions 336 and 341 each coordinate CDP. Phe-341 serves as a coordination point for ADP. Glu-342 provides a ligand contact to AMP. 3 residues coordinate ATP: Glu-342, Asp-373, and Thr-374. Residue Asp-373 coordinates Mg(2+).

The protein belongs to the phosphoglycerate kinase family. Monomer. It depends on Mg(2+) as a cofactor.

The protein resides in the cytoplasm. The protein localises to the mitochondrion. The enzyme catalyses (2R)-3-phosphoglycerate + ATP = (2R)-3-phospho-glyceroyl phosphate + ADP. The protein operates within carbohydrate degradation; glycolysis; pyruvate from D-glyceraldehyde 3-phosphate: step 2/5. Its function is as follows. Catalyzes one of the two ATP producing reactions in the glycolytic pathway via the reversible conversion of 1,3-diphosphoglycerate to 3-phosphoglycerate. Both L- and D- forms of purine and pyrimidine nucleotides can be used as substrates, but the activity is much lower on pyrimidines. Negatively regulates the biosynthesis of acetyl-CoA from pyruvate in the mitochondrion. The sequence is that of Phosphoglycerate kinase (PGKA) from Penicillium chrysogenum (Penicillium notatum).